The sequence spans 701 residues: DNA ligase (701 aa).

NAD(+)-binding positions include 43-47 (DADYD), 92-93 (SL), and E126. The active-site N6-AMP-lysine intermediate is K128. 4 residues coordinate NAD(+): R149, E186, K302, and K326. Zn(2+)-binding residues include C417, C420, C440, and C446. The region spanning 622-701 (ETGSPVTGKT…DEWLALIGET (80 aa)) is the BRCT domain.

The protein belongs to the NAD-dependent DNA ligase family. LigA subfamily. Requires Mg(2+) as cofactor. The cofactor is Mn(2+).

It carries out the reaction NAD(+) + (deoxyribonucleotide)n-3'-hydroxyl + 5'-phospho-(deoxyribonucleotide)m = (deoxyribonucleotide)n+m + AMP + beta-nicotinamide D-nucleotide.. Its function is as follows. DNA ligase that catalyzes the formation of phosphodiester linkages between 5'-phosphoryl and 3'-hydroxyl groups in double-stranded DNA using NAD as a coenzyme and as the energy source for the reaction. It is essential for DNA replication and repair of damaged DNA. This is DNA ligase from Hyphomonas neptunium (strain ATCC 15444).